The sequence spans 382 residues: Serine protease 43 (382 aa).

Positions 1–27 (MGGFCGADRGGFLALLVWLQLLQPLFS) are cleaved as a signal peptide. The tract at residues 30–97 (YKPREDSGVM…SGTTTKITLE (68 aa)) is disordered. Polar residues-rich tracts occupy residues 56-68 (AQQSRLKSLSISH) and 85-95 (GSPSGTTTKIT). The 237-residue stretch at 119–355 (VDPGSLSAGR…YNEWVSYVLS (237 aa)) folds into the Peptidase S1 domain. A disulfide bond links Cys-144 and Cys-160. Residues His-159 and Asp-205 each act as charge relay system in the active site. 3 cysteine pairs are disulfide-bonded: Cys-239–Cys-313, Cys-272–Cys-293, and Cys-303–Cys-331. Ser-307 functions as the Charge relay system in the catalytic mechanism. Residues 362-382 (PMGVLVLYLSLVFPLALLVAL) form a helical membrane-spanning segment.

This sequence belongs to the peptidase S1 family. Testis-specific. Expressed in germ cells at the stages from late pachytene spermatocytes to spermatids.

The protein resides in the cell membrane. In terms of biological role, plays a role in spermatogenesis. Involved in germ cell survival during meiosis. Lacks protease activity in vitro. The protein is Serine protease 43 of Mus musculus (Mouse).